A 258-amino-acid chain; its full sequence is Imidazole glycerol phosphate synthase subunit HisF (258 aa).

Active-site residues include aspartate 12 and aspartate 131.

The protein belongs to the HisA/HisF family. Heterodimer of HisH and HisF.

Its subcellular location is the cytoplasm. It carries out the reaction 5-[(5-phospho-1-deoxy-D-ribulos-1-ylimino)methylamino]-1-(5-phospho-beta-D-ribosyl)imidazole-4-carboxamide + L-glutamine = D-erythro-1-(imidazol-4-yl)glycerol 3-phosphate + 5-amino-1-(5-phospho-beta-D-ribosyl)imidazole-4-carboxamide + L-glutamate + H(+). It functions in the pathway amino-acid biosynthesis; L-histidine biosynthesis; L-histidine from 5-phospho-alpha-D-ribose 1-diphosphate: step 5/9. Its function is as follows. IGPS catalyzes the conversion of PRFAR and glutamine to IGP, AICAR and glutamate. The HisF subunit catalyzes the cyclization activity that produces IGP and AICAR from PRFAR using the ammonia provided by the HisH subunit. The chain is Imidazole glycerol phosphate synthase subunit HisF from Paenarthrobacter aurescens (strain TC1).